A 119-amino-acid polypeptide reads, in one-letter code: Nucleoid-associated protein Cphy_0047 (119 aa).

Residues 23 to 45 (AQRMQKQMEDKTKEMEEKQWEAT) form a disordered region. Residues 28-42 (KQMEDKTKEMEEKQW) are compositionally biased toward basic and acidic residues.

It belongs to the YbaB/EbfC family. Homodimer.

It is found in the cytoplasm. It localises to the nucleoid. Its function is as follows. Binds to DNA and alters its conformation. May be involved in regulation of gene expression, nucleoid organization and DNA protection. The polypeptide is Nucleoid-associated protein Cphy_0047 (Lachnoclostridium phytofermentans (strain ATCC 700394 / DSM 18823 / ISDg) (Clostridium phytofermentans)).